Consider the following 320-residue polypeptide: Olfactory receptor 51E2 (320 aa).

Over 1–24 (MSSCNFTHATFVLIGIPGLEKAHF) the chain is Extracellular. N-linked (GlcNAc...) asparagine glycosylation is present at Asn5. Residues 25 to 45 (WVGFPLLSMYVVAMFGNCIVV) traverse the membrane as a helical segment. Over 46-53 (FIVRTERS) the chain is Cytoplasmic. Residues 54-74 (LHAPMYLFLCMLAAIDLALST) traverse the membrane as a helical segment. The Extracellular segment spans residues 75–98 (STMPKILALFWFDSREISFEACLT). A disulfide bridge links Cys96 with Cys178. A helical membrane pass occupies residues 99–119 (QMFFIHALSAIESTILLAMAF). Residues 120 to 138 (DRYVAICHPLRHAAVLNNT) are Cytoplasmic-facing. Residues 139–159 (VTAQIGIVAVVRGSLFFFPLP) traverse the membrane as a helical segment. At 160 to 195 (LLIKRLAFCHSNVLSHSYCVHQDVMKLAYADTLPNV) the chain is on the extracellular side. A helical membrane pass occupies residues 196–216 (VYGLTAILLVMGVDVMFISLS). At 217-236 (YFLIIRTVLQLPSKSERAKA) the chain is on the cytoplasmic side. The chain crosses the membrane as a helical span at residues 237-257 (FGTCVSHIGVVLAFYVPLIGL). Topologically, residues 258–272 (SVVHRFGNSLHPIVR) are extracellular. The helical transmembrane segment at 273-293 (VVMGDIYLLLPPVINPIIYGA) threads the bilayer. Residues 294 to 320 (KTKQIRTRVLAMFKISCDKDLQAVGGK) lie on the Cytoplasmic side of the membrane.

This sequence belongs to the G-protein coupled receptor 1 family. Highly expressed in the prostate. Also expressed in spleen, liver, olfactory epithelium, retinal pigment epithelium and medulla oblongata. In the retinal pigment epithelium expression is restricted to the pigment cells and choroid (at protein level). Expressed in epidermal melanocytes (at protein level).

Its subcellular location is the cell membrane. The protein localises to the early endosome membrane. Functionally, olfactory receptor. Activated by the odorant, beta-ionone, a synthetic terpenoid. The activity of this receptor is probably mediated by G-proteins leading to the elevation of intracellular Ca(2+), cAMP and activation of the protein kinases PKA and MAPK3/MAPK1. Stimulation of OR51E2 by beta-ionone affects melanocyte proliferation, differentiation, and melanogenesis. Activation of OR51E2 by beta-ionone increases proliferation and migration of primary retinal pigment epithelial (RPE) cells. Activated also by the short-chain fatty acids (SCFA) acetate and propionate. In response to SCFA, may positively regulate renin secretion and increase blood pressure. May also be activated by steroid hormones and regulate cell proliferation. Activated by L-lactate in glomus cells. The chain is Olfactory receptor 51E2 from Homo sapiens (Human).